The chain runs to 415 residues: MKKRIGIVGAGTAGLHLGLFLRQHDVDVTVYTDRKPDEYSGLRLLNTVAHNAVTVQREVALDVNEWPSEEFGYFGHYYYVGGPQPMRFYGDLKAPSRAVDYRLYQPMLMRALEARGGKFCYDAVSAEDLEGLSEQYDLLVVCTGKYALGKVFEKQSENSPFEKPQRALCVGLFKGIKEAPIRAVTMSFSPGHGELIEIPTLSFNGMSTALVLENHIGSDLEVLAHTKYDDDPRAFLDLMLEKLGKHHPSVAERIDPAEFDLANSSLDILQGGVVPAFRDGHATLNNGKTIIGLGDIQATVDPVLGQGANMASYAAWILGEEILAHSVYDLRFSEHLERRRQDRVLCATRWTNFTLSALSALPPEFLAFLQILSQSREMADEFTDNFNYPERQWDRFSSPERIGQWCSQFAPTIAA.

This sequence belongs to the StyA family. In terms of assembly, homodimer. A direct interaction with the monooxygenase reductase component StyB seems not to be necessary for the enzymatic activity.

It carries out the reaction styrene + FADH2 + O2 = (S)-styrene oxide + FAD + H2O + H(+). It functions in the pathway aromatic compound metabolism. Its function is as follows. Styrene monooxygenase which catalyzes the first step in the aerobic styrene degradation pathway by enantioselective epoxidation of the vinyl side chain. In a two-component system, a reductase utilizes NADH to reduce FAD, which is then transferred to the oxygenase; the electron transfer is proposed to occur via a diffusing flavin. The sequence is that of Styrene monooxygenase StyA (styA) from Pseudomonas sp.